Consider the following 184-residue polypeptide: 1,6-anhydro-N-acetylmuramyl-L-alanine amidase AmpD (184 aa).

The N-acetylmuramoyl-L-alanine amidase domain occupies Q30–G171. Residue H38 participates in Zn(2+) binding. E120 acts as the Proton acceptor in catalysis. 2 residues coordinate Zn(2+): H159 and D169.

The protein belongs to the N-acetylmuramoyl-L-alanine amidase 2 family. It depends on Zn(2+) as a cofactor.

The protein localises to the cytoplasm. The enzyme catalyses Hydrolyzes the link between N-acetylmuramoyl residues and L-amino acid residues in certain cell-wall glycopeptides.. Its function is as follows. Involved in cell wall peptidoglycan recycling. Specifically cleaves the amide bond between the lactyl group of N-acetylmuramic acid and the alpha-amino group of the L-alanine in degradation products containing an anhydro N-acetylmuramyl moiety. This is 1,6-anhydro-N-acetylmuramyl-L-alanine amidase AmpD (ampD) from Haemophilus influenzae (strain ATCC 51907 / DSM 11121 / KW20 / Rd).